The chain runs to 1014 residues: Isoleucine--tRNA ligase (1014 aa).

Positions 48–58 (PTANGRPGIHH) match the 'HIGH' region motif. The short motif at 628 to 632 (KMSKS) is the 'KMSKS' region element. Lys631 serves as a coordination point for ATP.

Belongs to the class-I aminoacyl-tRNA synthetase family. IleS type 2 subfamily. In terms of assembly, monomer. Zn(2+) is required as a cofactor.

The protein resides in the cytoplasm. It catalyses the reaction tRNA(Ile) + L-isoleucine + ATP = L-isoleucyl-tRNA(Ile) + AMP + diphosphate. In terms of biological role, catalyzes the attachment of isoleucine to tRNA(Ile). As IleRS can inadvertently accommodate and process structurally similar amino acids such as valine, to avoid such errors it has two additional distinct tRNA(Ile)-dependent editing activities. One activity is designated as 'pretransfer' editing and involves the hydrolysis of activated Val-AMP. The other activity is designated 'posttransfer' editing and involves deacylation of mischarged Val-tRNA(Ile). This Dehalococcoides mccartyi (strain CBDB1) protein is Isoleucine--tRNA ligase.